The chain runs to 1318 residues: Tetratricopeptide repeat protein 41 (1318 aa).

6 TPR repeats span residues 401–434 (PRLEMDFLNEDSNVLVFSLLVEVFIAAISLKPCI), 653–686 (WIQEKPNGLLYFQHQSLRSAVEHKLLGVSTPVRE), 819–852 (GRIILFIGSFLKLMGKINEAEKLFLSAEDLLLQS), 860–893 (LRAQNAIGELYLEIGMTPKGLTYFQKAWSNLLRF), 993–1029 (MEFLADLLFFLLGENEKSQKKQAIEYYKQVIKIKEKA), and 1047–1084 (SDTLCKLAGQLLSGDFCHHATMEAVSYLYRSLDLRAAH). The tract at residues 1295-1318 (KPGFPRRSQIESKLLKTSDDPNKE) is disordered. A compositionally biased stretch (basic and acidic residues) spans 1302–1318 (SQIESKLLKTSDDPNKE).

As to expression, highly expressed in lung and myeloid leukemia cell line (at protein level). Isoform 4: expressed in heart (at protein level).

It is found in the cytoplasm. The chain is Tetratricopeptide repeat protein 41 from Mus musculus (Mouse).